Consider the following 149-residue polypeptide: Nascent polypeptide-associated complex subunit beta-2 (149 aa).

One can recognise an NAC-A/B domain in the interval 38–103 (DKDNTKLQAE…PKENTLNGLY (66 aa)).

This sequence belongs to the NAC-beta family. Part of the nascent polypeptide-associated complex (NAC), consisting of EGD2 and either EGD1 or BTT1. NAC associates with ribosomes via EGD1 or BTT1.

It localises to the cytoplasm. The protein localises to the nucleus. In terms of biological role, acts as a component of the nascent polypeptide-associated complex (NAC), which promotes mitochondrial protein import by enhancing productive ribosome interactions with the outer mitochondrial membrane. Also blocks the inappropriate interaction of ribosomes translating non-secretory nascent polypeptides with translocation sites in the membrane of the endoplasmic reticulum. BTT1 may act as a transcription factor that exert a negative effect on the expression of several genes that are transcribed by RNA polymerase II. This chain is Nascent polypeptide-associated complex subunit beta-2 (BTT1), found in Saccharomyces cerevisiae (strain ATCC 204508 / S288c) (Baker's yeast).